A 702-amino-acid polypeptide reads, in one-letter code: Dynein intermediate chain 2, ciliary (702 aa).

The segment covering 1–11 has biased composition (low complexity); sequence MPVKSTKTKGG. Disordered stretches follow at residues 1 to 64, 128 to 226, and 243 to 272; these read MPVK…IKPD, DEAR…FSST, and QEKAKEKKAAPSKKDDDKSKKKLTALETQS. 2 stretches are compositionally biased toward basic and acidic residues: residues 36-52 and 152-176; these read GKKDDDDATEAGEHGGE and GEEKKEEDGEQKTEEPKEGEKRDEE. A compositionally biased stretch (polar residues) spans 189–206; the sequence is KLTNQFNFSERASQTYNN. Positions 243 to 261 are enriched in basic and acidic residues; the sequence is QEKAKEKKAAPSKKDDDKS. WD repeat units lie at residues 380–420, 429–472, 490–533, 537–577, 580–620, and 628–667; these read PTDS…ANPV, KHTD…LTYT, TQLT…QFLD, AHHM…GPMF, DLGS…YEPI, and KKKTKLTHITFNPNFPIVLVGDDRGYVSSLKLSPNLRKVP.

It belongs to the dynein intermediate chain family. As to quaternary structure, consists of at least two heavy chains (alpha and beta), three intermediate chains and several light chains.

The protein resides in the cytoplasm. The protein localises to the cytoskeleton. It is found in the cilium axoneme. In terms of biological role, microtubule-binding protein that may be involved in dynein outer arm assembly on the axoneme. This chain is Dynein intermediate chain 2, ciliary, found in Heliocidaris crassispina (Sea urchin).